The following is a 416-amino-acid chain: CinA-like protein (416 aa).

Belongs to the CinA family.

The chain is CinA-like protein from Syntrophomonas wolfei subsp. wolfei (strain DSM 2245B / Goettingen).